Consider the following 195-residue polypeptide: Xanthine phosphoribosyltransferase (195 aa).

Positions 20 and 27 each coordinate xanthine. 128-132 (ANGQA) is a 5-phospho-alpha-D-ribose 1-diphosphate binding site. Lysine 156 provides a ligand contact to xanthine.

Belongs to the purine/pyrimidine phosphoribosyltransferase family. Xpt subfamily. In terms of assembly, homodimer.

The protein resides in the cytoplasm. It carries out the reaction XMP + diphosphate = xanthine + 5-phospho-alpha-D-ribose 1-diphosphate. It participates in purine metabolism; XMP biosynthesis via salvage pathway; XMP from xanthine: step 1/1. Functionally, converts the preformed base xanthine, a product of nucleic acid breakdown, to xanthosine 5'-monophosphate (XMP), so it can be reused for RNA or DNA synthesis. This is Xanthine phosphoribosyltransferase from Limosilactobacillus fermentum (strain NBRC 3956 / LMG 18251) (Lactobacillus fermentum).